A 238-amino-acid polypeptide reads, in one-letter code: Succinate dehydrogenase assembly factor 2, mitochondrial (238 aa).

Residues 47-82 are disordered; the sequence is GLKADGSRADQAEAGASQSLDKQSRTLDSVRDDTLS. The span at 68-80 shows a compositional bias: basic and acidic residues; it reads KQSRTLDSVRDDT.

The protein belongs to the SDHAF2 family. Interacts with the flavoprotein subunit within the SDH catalytic dimer.

The protein resides in the mitochondrion matrix. Plays an essential role in the assembly of succinate dehydrogenase (SDH), an enzyme complex (also referred to as respiratory complex II) that is a component of both the tricarboxylic acid (TCA) cycle and the mitochondrial electron transport chain, and which couples the oxidation of succinate to fumarate with the reduction of ubiquinone (coenzyme Q) to ubiquinol. Required for flavinylation (covalent attachment of FAD) of the flavoprotein subunit of the SDH catalytic dimer. This is Succinate dehydrogenase assembly factor 2, mitochondrial from Mycosarcoma maydis (Corn smut fungus).